The sequence spans 1083 residues: Carbamoyl phosphate synthase large chain (1083 aa).

The segment at 1 to 402 (MPRRDDIKKI…SFQKALRGLE (402 aa)) is carboxyphosphate synthetic domain. The ATP site is built by R129, R169, G175, G176, E208, I210, E215, G241, V242, H243, Q285, and E299. Residues 133–328 (KQAMDKIGLD…IAKIAAKLAV (196 aa)) form the ATP-grasp 1 domain. Mg(2+) contacts are provided by Q285, E299, and N301. Residues Q285, E299, and N301 each coordinate Mn(2+). The segment at 403 to 557 (VGAFGFGSDP…YSTYESETEV (155 aa)) is oligomerization domain. The tract at residues 558-944 (PAKGDKKRVV…AFAKSQLAAG (387 aa)) is carbamoyl phosphate synthetic domain. In terms of domain architecture, ATP-grasp 2 spans 683 to 878 (SSLIDELGLR…VANLATKVMA (196 aa)). The ATP site is built by R719, R758, L760, E765, G790, V791, H792, S793, Q833, and E849. Mg(2+) contacts are provided by Q833, E849, and N851. The Mn(2+) site is built by Q833, E849, and N851. The region spanning 945-1083 (TVLPESGKIF…SLQRRYAQNV (139 aa)) is the MGS-like domain. The interval 945–1083 (TVLPESGKIF…SLQRRYAQNV (139 aa)) is allosteric domain.

This sequence belongs to the CarB family. As to quaternary structure, composed of two chains; the small (or glutamine) chain promotes the hydrolysis of glutamine to ammonia, which is used by the large (or ammonia) chain to synthesize carbamoyl phosphate. Tetramer of heterodimers (alpha,beta)4. The cofactor is Mg(2+). It depends on Mn(2+) as a cofactor.

It catalyses the reaction hydrogencarbonate + L-glutamine + 2 ATP + H2O = carbamoyl phosphate + L-glutamate + 2 ADP + phosphate + 2 H(+). The enzyme catalyses hydrogencarbonate + NH4(+) + 2 ATP = carbamoyl phosphate + 2 ADP + phosphate + 2 H(+). It functions in the pathway amino-acid biosynthesis; L-arginine biosynthesis; carbamoyl phosphate from bicarbonate: step 1/1. It participates in pyrimidine metabolism; UMP biosynthesis via de novo pathway; (S)-dihydroorotate from bicarbonate: step 1/3. Its function is as follows. Large subunit of the glutamine-dependent carbamoyl phosphate synthetase (CPSase). CPSase catalyzes the formation of carbamoyl phosphate from the ammonia moiety of glutamine, carbonate, and phosphate donated by ATP, constituting the first step of 2 biosynthetic pathways, one leading to arginine and/or urea and the other to pyrimidine nucleotides. The large subunit (synthetase) binds the substrates ammonia (free or transferred from glutamine from the small subunit), hydrogencarbonate and ATP and carries out an ATP-coupled ligase reaction, activating hydrogencarbonate by forming carboxy phosphate which reacts with ammonia to form carbamoyl phosphate. The chain is Carbamoyl phosphate synthase large chain from Rhodopirellula baltica (strain DSM 10527 / NCIMB 13988 / SH1).